The sequence spans 136 residues: Putative pre-16S rRNA nuclease (136 aa).

It belongs to the YqgF nuclease family.

The protein localises to the cytoplasm. Functionally, could be a nuclease involved in processing of the 5'-end of pre-16S rRNA. This chain is Putative pre-16S rRNA nuclease, found in Francisella tularensis subsp. holarctica (strain FTNF002-00 / FTA).